The primary structure comprises 306 residues: Curved DNA-binding protein (306 aa).

Residues 5-69 (DYYAIMGVKP…QRRAEYDQMW (65 aa)) enclose the J domain.

Its subcellular location is the cytoplasm. It is found in the nucleoid. In terms of biological role, DNA-binding protein that preferentially recognizes a curved DNA sequence. It is probably a functional analog of DnaJ; displays overlapping activities with DnaJ, but functions under different conditions, probably acting as a molecular chaperone in an adaptive response to environmental stresses other than heat shock. Lacks autonomous chaperone activity; binds native substrates and targets them for recognition by DnaK. Its activity is inhibited by the binding of CbpM. This Escherichia coli O127:H6 (strain E2348/69 / EPEC) protein is Curved DNA-binding protein.